The primary structure comprises 124 residues: Large ribosomal subunit protein bL21 (124 aa).

The protein belongs to the bacterial ribosomal protein bL21 family. Part of the 50S ribosomal subunit. Contacts protein L20.

Functionally, this protein binds to 23S rRNA in the presence of protein L20. The sequence is that of Large ribosomal subunit protein bL21 from Synechococcus sp. (strain WH7803).